The primary structure comprises 192 residues: MSSRDYMNTSVQEPPLDYSFKSVQMVQDLVTEEPRTGLRPVRHSKSGKSLTQSLWLNNNVLNDLKDFNQVVSQLLQHPENLAWIDLSFNDLTTIDPVLTTFFNLSVLYLHGNGIHRLGEVNKLAVLPRLRSLTLHGNPIEEEKGYRQYVLCNLPRITTFDFSGVTRADRSTAEVWKRMGIKPKKVRAKQDVL.

LRR repeat units lie at residues 49–71 (SLTQ…NQVV), 80–101 (NLAW…LTTF), and 103–124 (NLSV…NKLA). In terms of domain architecture, LRRCT spans 137-175 (NPIEEEKGYRQYVLCNLPRITTFDFSGVTRADRSTAEVW).

In terms of tissue distribution, widely expressed in adult and embryonic tissues. Expressed in the developing choroid plexus from 12.5 dpc and in the epithelium of the developing airway tract from 14.5 dpc. Also expressed in the postnatal inner ear.

It is found in the cytoplasm. The sequence is that of Leucine-rich repeat-containing protein 51 from Mus musculus (Mouse).